Consider the following 367-residue polypeptide: MEAERLNSLESLLADLTTRATELRRYLDFDVKSEKLDQVNGELEDPDVWNDQKRAQDLGKEKKSLEAIVHTLIKIDSELNDARDLFEMAREEKDEDTIVAIENDAQELLKLVEGMEFRRMFSNPMDANNCFIDIQAGAGGTEAQDWASMLLRQYLRYCERKGFKVEILEQSDGEVAGIKTATLKVEGDYAYGFLRTETGVHRLVRKSPFDSANGRHTSFSSLFVYPEVDDSIEIDINPADVRIDTYRASGAGGQHINKTDSAVRLTHGPSGIVVQCQNDRSQHRNKAEAWDMLKAKLFELEMRNRMSEQQKLEDSKTDVGWGHQIRSYVLDQSRIKDLRTNFETGNTKAVLDGDLDDFIAASLKQGV.

Gln-254 is modified (N5-methylglutamine).

Belongs to the prokaryotic/mitochondrial release factor family. Post-translationally, methylated by PrmC. Methylation increases the termination efficiency of RF2.

It is found in the cytoplasm. In terms of biological role, peptide chain release factor 2 directs the termination of translation in response to the peptide chain termination codons UGA and UAA. The polypeptide is Peptide chain release factor 2 (Janthinobacterium sp. (strain Marseille) (Minibacterium massiliensis)).